The primary structure comprises 105 residues: Replication restart protein PriB (105 aa).

The SSB domain occupies 1 to 102 (MTANRLTLSG…LHAEQIELID (102 aa)).

It belongs to the PriB family. Homodimer. Interacts with PriA and DnaT. Component of the replication restart primosome. Primosome assembly occurs via a 'hand-off' mechanism. PriA binds to replication forks, subsequently PriB then DnaT bind; DnaT then displaces ssDNA to generate the helicase loading substrate.

Its function is as follows. Involved in the restart of stalled replication forks, which reloads the replicative helicase on sites other than the origin of replication; the PriA-PriB pathway is the major replication restart pathway. During primosome assembly it facilitates complex formation between PriA and DnaT on DNA; stabilizes PriA on DNA. Stimulates the DNA unwinding activity of PriA helicase. The polypeptide is Replication restart protein PriB (Serratia proteamaculans (strain 568)).